The primary structure comprises 73 residues: UPF0435 protein lwe1727 (73 aa).

This sequence belongs to the UPF0435 family.

The sequence is that of UPF0435 protein lwe1727 from Listeria welshimeri serovar 6b (strain ATCC 35897 / DSM 20650 / CCUG 15529 / CIP 8149 / NCTC 11857 / SLCC 5334 / V8).